The primary structure comprises 311 residues: Dehydrogenase/reductase SDR family member 7C (311 aa).

The first 18 residues, 1–18, serve as a signal peptide directing secretion; the sequence is MGLMAVLMLPLLLLGISG. NAD(+) contacts are provided by Ser-47, Leu-49, Tyr-191, Lys-195, and Ser-226. Tyr-191 (proton acceptor) is an active-site residue.

The protein belongs to the short-chain dehydrogenases/reductases (SDR) family. In terms of tissue distribution, expressed in skeletal muscle and cardiac muscle. Also expressed in liver, kidney, adipocytes and skin.

The protein resides in the sarcoplasmic reticulum membrane. The catalysed reaction is all-trans-retinol + NAD(+) = all-trans-retinal + NADH + H(+). Its function is as follows. NADH-dependent oxidoreductase which catalyzes the oxidation of all-trans-retinol to all-trans-retinal. Plays a role in the regulation of cardiac and skeletal muscle metabolic functions. Maintains Ca(2+) intracellular homeostasis by repressing Ca(2+) release from the sarcoplasmic reticulum (SR) in myotubes, possibly through local alternations in NAD/NADH or retinol/retinal. Also plays a role in Ca(2+) homeostasis by controlling Ca(2+) overload in the cytosol and the SR in myotubes. Involved in glucose uptake into skeletal muscles and muscle performance by activating PI3K and mTORC2-mediated AKT1 phosphorylation signaling pathways, possibly through the action of its downstream catalytic product all-trans-retinoic acid. This Mus musculus (Mouse) protein is Dehydrogenase/reductase SDR family member 7C.